We begin with the raw amino-acid sequence, 233 residues long: MLEKCPIIALDFSDLASVTTFLEHFPKEELLFVKIGMELYYSEGPSIIRYIKSLGHRIFLDLKLHDIPNTVRSSMSVLAKLGIDMTNVHAAGGVEMMKAAREGLGEGPILLAVTQLTSTSQEQMQVDQHINLSVVDSVCHYAQKAQEAGLDGVVASAQEVKQIKKQTNEHFICLTPGIRPPQTNQLDDQKRTMTPEQARIVGADYIVVGRPITKAENPYQAYLDIKEEWNRIK.

Substrate is bound by residues D11, K34, 61–70 (DLKLHDIPNT), T117, R179, Q189, G209, and R210. K63 serves as the catalytic Proton donor.

The protein belongs to the OMP decarboxylase family. Type 1 subfamily. In terms of assembly, homodimer.

The enzyme catalyses orotidine 5'-phosphate + H(+) = UMP + CO2. It participates in pyrimidine metabolism; UMP biosynthesis via de novo pathway; UMP from orotate: step 2/2. In terms of biological role, catalyzes the decarboxylation of orotidine 5'-monophosphate (OMP) to uridine 5'-monophosphate (UMP). This is Orotidine 5'-phosphate decarboxylase from Streptococcus agalactiae serotype Ia (strain ATCC 27591 / A909 / CDC SS700).